Here is a 539-residue protein sequence, read N- to C-terminus: 2-isopropylmalate synthase (539 aa).

In terms of domain architecture, Pyruvate carboxyltransferase spans 8–269 (VLIFDTTLRD…YFNPFFGRPP (262 aa)). The Mn(2+) site is built by aspartate 17, histidine 208, histidine 210, and asparagine 244. Residues 408-539 (QLKLVQVSCG…DLAKVEKKGI (132 aa)) are regulatory domain.

The protein belongs to the alpha-IPM synthase/homocitrate synthase family. LeuA type 1 subfamily. Homodimer. Mn(2+) is required as a cofactor.

It is found in the cytoplasm. The catalysed reaction is 3-methyl-2-oxobutanoate + acetyl-CoA + H2O = (2S)-2-isopropylmalate + CoA + H(+). Its pathway is amino-acid biosynthesis; L-leucine biosynthesis; L-leucine from 3-methyl-2-oxobutanoate: step 1/4. Functionally, catalyzes the condensation of the acetyl group of acetyl-CoA with 3-methyl-2-oxobutanoate (2-ketoisovalerate) to form 3-carboxy-3-hydroxy-4-methylpentanoate (2-isopropylmalate). The polypeptide is 2-isopropylmalate synthase (Prochlorococcus marinus (strain NATL2A)).